The sequence spans 303 residues: Sulfotransferase 6B1 (303 aa).

65 to 70 (KCGSNW) contacts 3'-phosphoadenylyl sulfate. The Proton acceptor role is filled by His-118. 3'-phosphoadenylyl sulfate contacts are provided by residues Arg-140, Ser-148, Tyr-203, 237 to 242 (STFQAM), and 259 to 261 (RKG).

This sequence belongs to the sulfotransferase 1 family.

Its subcellular location is the cytoplasm. It is found in the cytosol. The enzyme catalyses thyroxine + 3'-phosphoadenylyl sulfate = thyroxine sulfate + adenosine 3',5'-bisphosphate + H(+). In terms of biological role, sulfotransferase that utilizes 3'-phospho-5'-adenylyl sulfate (PAPS) as sulfonate donor to catalyze the sulfate conjugation of thyroxine. Involved in the metabolism of thyroxine. The chain is Sulfotransferase 6B1 (SULT6B1) from Gorilla gorilla gorilla (Western lowland gorilla).